The following is a 116-amino-acid chain: Ribonuclease T (116 aa).

Residues 18–99 (KRAILVGHNS…YDTEKTAELF (82 aa)) enclose the Exonuclease domain. The active-site Proton donor/acceptor is histidine 86.

It belongs to the RNase T family. Homodimer.

Trims short 3' overhangs of a variety of RNA species, leaving a one or two nucleotide 3' overhang. Responsible for the end-turnover of tRNA: specifically removes the terminal AMP residue from uncharged tRNA (tRNA-C-C-A). Also appears to be involved in tRNA biosynthesis. The chain is Ribonuclease T from Azotobacter vinelandii.